The primary structure comprises 594 residues: Probable translation initiation factor IF-2 (594 aa).

The tr-type G domain occupies 11–226; sequence LRTPIVCVMG…LIGLAQRFLE (216 aa). Positions 20–27 are G1; sequence GHVDHGKT. 20–27 contributes to the GTP binding site; sequence GHVDHGKT. A G2 region spans residues 45-49; sequence AITQH. A G3 region spans residues 81-84; that stretch reads DTPG. GTP-binding positions include 81–85 and 135–138; these read DTPGH and NKID. Residues 135–138 are G4; the sequence is NKID. The segment at 203–205 is G5; it reads SAR.

This sequence belongs to the TRAFAC class translation factor GTPase superfamily. Classic translation factor GTPase family. IF-2 subfamily.

Functionally, function in general translation initiation by promoting the binding of the formylmethionine-tRNA to ribosomes. Seems to function along with eIF-2. This chain is Probable translation initiation factor IF-2, found in Methanocella arvoryzae (strain DSM 22066 / NBRC 105507 / MRE50).